We begin with the raw amino-acid sequence, 332 residues long: Ketol-acid reductoisomerase (NADP(+)) (332 aa).

Positions 2–182 (AKVYHDTEVS…GATRAGVLET (181 aa)) constitute a KARI N-terminal Rossmann domain. NADP(+)-binding positions include 25 to 28 (YGSQ), R48, S53, and 83 to 86 (DTEQ). H108 is an active-site residue. G134 contributes to the NADP(+) binding site. Residues 183–328 (TFKEETETDL…KVLREMMPWL (146 aa)) form the KARI C-terminal knotted domain. Positions 191, 195, 227, and 231 each coordinate Mg(2+). A substrate-binding site is contributed by S252.

It belongs to the ketol-acid reductoisomerase family. The cofactor is Mg(2+).

It carries out the reaction (2R)-2,3-dihydroxy-3-methylbutanoate + NADP(+) = (2S)-2-acetolactate + NADPH + H(+). It catalyses the reaction (2R,3R)-2,3-dihydroxy-3-methylpentanoate + NADP(+) = (S)-2-ethyl-2-hydroxy-3-oxobutanoate + NADPH + H(+). The protein operates within amino-acid biosynthesis; L-isoleucine biosynthesis; L-isoleucine from 2-oxobutanoate: step 2/4. It participates in amino-acid biosynthesis; L-valine biosynthesis; L-valine from pyruvate: step 2/4. In terms of biological role, involved in the biosynthesis of branched-chain amino acids (BCAA). Catalyzes an alkyl-migration followed by a ketol-acid reduction of (S)-2-acetolactate (S2AL) to yield (R)-2,3-dihydroxy-isovalerate. In the isomerase reaction, S2AL is rearranged via a Mg-dependent methyl migration to produce 3-hydroxy-3-methyl-2-ketobutyrate (HMKB). In the reductase reaction, this 2-ketoacid undergoes a metal-dependent reduction by NADPH to yield (R)-2,3-dihydroxy-isovalerate. This chain is Ketol-acid reductoisomerase (NADP(+)), found in Dictyoglomus turgidum (strain DSM 6724 / Z-1310).